Consider the following 677-residue polypeptide: Transmembrane and coiled-coil domain-containing protein 3 (677 aa).

The first 22 residues, 1 to 22, serve as a signal peptide directing secretion; the sequence is MKVLGRSFFWVLFPVLPWAVQA. Positions 124–204 form a coiled coil; that stretch reads DYKDVVNMKE…EEEIEEHAFD (81 aa). N-linked (GlcNAc...) asparagine glycans are attached at residues N206 and N230. A run of 10 helical transmembrane segments spans residues 286 to 306, 317 to 337, 350 to 370, 416 to 436, 456 to 476, 498 to 518, 554 to 574, 578 to 598, 608 to 628, and 640 to 660; these read WLCTAIGLPTMFGYIICGVLL, IVQVETLGEFGVFFTLFLVGL, ISLQGPCYMTLLMIAFGLLWG, VLLGMLVTQDVQLGLFMAVMP, ILVLIGQILFSLAAVFLLCLV, EILILGISAFIFLMLTVTELL, FLAIVFFASIGLHVFPTFVAY, VLVFLTLSVVVMKFLLAALVL, YIKWIVSAGLAQVSEFSFVLG, and EVYLLILSVTTLSLLLAPVLW.

The protein belongs to the monovalent cation:proton antiporter 2 (CPA2) transporter (TC 2.A.37) family. In terms of tissue distribution, expressed in the cornea, lens capsule and choroid-retinal pigment epithelium (at protein level).

The protein localises to the membrane. Functionally, probable Na(+)/H(+) antiporter. In Homo sapiens (Human), this protein is Transmembrane and coiled-coil domain-containing protein 3 (TMCO3).